A 284-amino-acid polypeptide reads, in one-letter code: Small ribosomal subunit protein uS2 (284 aa).

Belongs to the universal ribosomal protein uS2 family.

This chain is Small ribosomal subunit protein uS2 (rpsB), found in Mycoplasma genitalium (strain ATCC 33530 / DSM 19775 / NCTC 10195 / G37) (Mycoplasmoides genitalium).